A 291-amino-acid polypeptide reads, in one-letter code: Probable cell wall amidase LytH (291 aa).

The first 40 residues, 1–40 (MKKIDSWLTKHGLKNRLTLVVIVIFIIFLILLFMFVNLSD), serve as a signal peptide directing secretion. One can recognise an SH3b domain in the interval 41–105 (EDTGQITITE…WVAGWHTNLN (65 aa)). One can recognise a MurNAc-LAA domain in the interval 122-286 (IVLDPGHGGS…VEQAIVDGLK (165 aa)). The interval 123 to 147 (VLDPGHGGSDQGASSSTPSKSLEKN) is disordered. The segment covering 133–142 (QGASSSTPSK) has biased composition (polar residues).

Belongs to the N-acetylmuramoyl-L-alanine amidase 3 family.

The protein resides in the secreted. Probably involved in cell-wall metabolism. The chain is Probable cell wall amidase LytH (lytH) from Staphylococcus epidermidis (strain ATCC 35984 / DSM 28319 / BCRC 17069 / CCUG 31568 / BM 3577 / RP62A).